The following is a 90-amino-acid chain: UPF0329 protein ECU04_1650 (90 aa).

The protein belongs to the UPF0329 family.

This is UPF0329 protein ECU04_1650 from Encephalitozoon cuniculi (strain GB-M1) (Microsporidian parasite).